Reading from the N-terminus, the 136-residue chain is Large ribosomal subunit protein bL17 (136 aa).

The protein belongs to the bacterial ribosomal protein bL17 family. As to quaternary structure, part of the 50S ribosomal subunit. Contacts protein L32.

This is Large ribosomal subunit protein bL17 from Rickettsia conorii (strain ATCC VR-613 / Malish 7).